The following is a 402-amino-acid chain: Zinc finger CCHC domain-containing protein 12 (402 aa).

The disordered stretch occupies residues Ile308–Arg341. Positions Pro311–Ser322 are enriched in polar residues. The CCHC-type zinc-finger motif lies at Ile345 to Asn362.

The protein belongs to the ZCCHC12 family. Interacts with SMAD1 and CREB-binding protein (CBP). Forms a protein-DNA complex through its association with SMAD1.

Its function is as follows. Transcriptional coactivator in the bone morphogenetic protein (BMP)-signaling pathway. It positively modulates BMP signaling by interacting with SMAD1 and associating with CBP in the transcription complex. It contributes to the BMP-induced enhancement of cholinergic-neuron-specific gene expression. The polypeptide is Zinc finger CCHC domain-containing protein 12 (ZCCHC12) (Homo sapiens (Human)).